Reading from the N-terminus, the 344-residue chain is N-acetyl-gamma-glutamyl-phosphate reductase (344 aa).

Cysteine 149 is a catalytic residue.

This sequence belongs to the NAGSA dehydrogenase family. Type 1 subfamily.

The protein localises to the cytoplasm. It catalyses the reaction N-acetyl-L-glutamate 5-semialdehyde + phosphate + NADP(+) = N-acetyl-L-glutamyl 5-phosphate + NADPH + H(+). The protein operates within amino-acid biosynthesis; L-arginine biosynthesis; N(2)-acetyl-L-ornithine from L-glutamate: step 3/4. In terms of biological role, catalyzes the NADPH-dependent reduction of N-acetyl-5-glutamyl phosphate to yield N-acetyl-L-glutamate 5-semialdehyde. In Halorhodospira halophila (strain DSM 244 / SL1) (Ectothiorhodospira halophila (strain DSM 244 / SL1)), this protein is N-acetyl-gamma-glutamyl-phosphate reductase.